The chain runs to 433 residues: MARCTNLVTVFLLWALLMFSWCKASRISPNVYDHSYKRFKSDSLIKRREDITGLRSFVRASLRTPTTVSVSDFGAKGDGKTDDTQAFVNAWKKACSSNGAVNLLVPKGNTYLLKSIQLTGPCNSILTVQIFGTLSASQKRSDYKDISKWIMFDGVNNLSVDGGDTGVVDGNGETWWQNSCKRNKAKPCTKAPTALTFYNSKSLIVKNLKVRNAQQIQISIEKCSNVQVSNVVVTAPADSPNTDGIHITNTQNIRVSESIIGTGDDCISIESGSQNVQINDITCGPGHGISIGSLGDDNSKAFVSGVTVDGAKLSGTDNGVRIKTYQGGSGTASNIIFQNIQMDNVKNPIIIDQDYCDKSKCTTEKSAVQVKNVVYRDISGTSASENAITFNCSKNYPCQGIVLDRVNIKGGKATCTNANVVDKGAVLPQCNST.

The first 24 residues, 1-24 (MARCTNLVTVFLLWALLMFSWCKA), serve as a signal peptide directing secretion. 5 PbH1 repeats span residues 223–249 (CSNV…HITN), 250–271 (TQNI…SIES), 273–293 (SQNV…SIGS), 303–324 (VSGV…RIKT), and 332–353 (ASNI…IIDQ). The Proton donor role is filled by Asp-264. His-287 is an active-site residue.

This sequence belongs to the glycosyl hydrolase 28 family. As to expression, expressed in roots and in the abscission zone of the sepals, petals and stamens of flowers, at the base of cauline leaves and in the basal cell of trichomes from senescing leaves. Found at the site of lateral root emergence, in the dehiscence zone of anthers and maturing siliques. Also expressed early in anther development, at the time of microspore separation. Expressed in germinating seeds, at the point at which the radicle broke through the seed coat. Not expressed at the junction between the seed and the funiculus or in the dehiscence zone of anthers or pods.

Its subcellular location is the secreted. It localises to the cell wall. It catalyses the reaction (1,4-alpha-D-galacturonosyl)n+m + H2O = (1,4-alpha-D-galacturonosyl)n + (1,4-alpha-D-galacturonosyl)m.. In terms of biological role, polygalacturonase involved in cell separation in the final stages of pod shatter, in anther dehiscence and in floral organ abscission. This is Polygalacturonase ADPG2 (ADPG2) from Arabidopsis thaliana (Mouse-ear cress).